The primary structure comprises 210 residues: Syntaxin-binding protein 6 (210 aa).

Position 2 is an N-acetylserine (Ser-2). The v-SNARE coiled-coil homology domain occupies 151–210 (GNSILHSAADSVTSAVQKASQALNERGERLGRAEEKTEDLKNSAQQFAETAHKLAMKHKC).

In terms of assembly, part of a ternary complex containing SNAP25 and STX1A that can be dissociated by NAPA and NSF. Interacts with STX4A. Detected at low levels in brain, and at very low levels in heart, adrenal gland, testis, liver and kidney.

The protein localises to the cytoplasm. The protein resides in the membrane. In terms of biological role, forms non-fusogenic complexes with SNAP25 and STX1A and may thereby modulate the formation of functional SNARE complexes and exocytosis. The sequence is that of Syntaxin-binding protein 6 (STXBP6) from Homo sapiens (Human).